The primary structure comprises 337 residues: MTMIRKFKLYQYSIPVDSQLILRNRFLKKREGLLVQVCCDDAQGWGEIAPLPEFSQETLEQAREQALAWLEEWSASDGSAGKLPLEHLFPSVAFGLSCALAEMKGLLHEEGNYQVAPLCYGDPDELYDPLNQMQGEKVAKIKVGMYEANRDGLIADMLLEAIPDLHLRLDANRSWTPSKAQMFAKYVKPEHRARIQFLEEPCKTPAESLQFAEETGIAIAWDETVRDAEFQQNPPHFFTPQVKAIVIKPTLVGSIQRCVELIKQAHAHGIQAVISSSIESSLGLTQLARLAQQYTPNTVPGLDTLDLMDYQVIRPWPSSTLPLIDLDSEYIVPIKLD.

K142 serves as the catalytic Proton donor. Mg(2+) is bound by residues D170, E199, and D222. Residue K248 is the Proton acceptor of the active site.

It belongs to the mandelate racemase/muconate lactonizing enzyme family. MenC type 1 subfamily. A divalent metal cation serves as cofactor.

The enzyme catalyses (1R,6R)-6-hydroxy-2-succinyl-cyclohexa-2,4-diene-1-carboxylate = 2-succinylbenzoate + H2O. It functions in the pathway quinol/quinone metabolism; 1,4-dihydroxy-2-naphthoate biosynthesis; 1,4-dihydroxy-2-naphthoate from chorismate: step 4/7. The protein operates within quinol/quinone metabolism; menaquinone biosynthesis. Functionally, converts 2-succinyl-6-hydroxy-2,4-cyclohexadiene-1-carboxylate (SHCHC) to 2-succinylbenzoate (OSB). The chain is o-succinylbenzoate synthase from Pasteurella multocida (strain Pm70).